A 490-amino-acid polypeptide reads, in one-letter code: Transcriptional activator/repressor MOT3 (490 aa).

Met-1 bears the N-acetylmethionine mark. Disordered regions lie at residues 1 to 69 (MNAD…NKDD), 101 to 162 (NNNN…HPNQ), and 214 to 267 (NNGN…PQHH). Positions 8–36 (QQQQQQRQQHQQQQHQQQQHQHQHQQQQH) are enriched in low complexity. Residues 37-65 (TILQNVSNTNNIGSDSLASQPFNTTTVSS) show a composition bias toward polar residues. A prion domain (PrD) region spans residues 98 to 295 (NNSNNNNVTA…NLNLNINPAQ (198 aa)). 4 stretches are compositionally biased toward low complexity: residues 119–128 (NNSNNSNNSN), 138–157 (NNST…NNNN), 214–232 (NNGN…HSAP), and 248–264 (THNN…NNAP). 2 C2H2-type zinc fingers span residues 346–368 (HQCQ…LLSH) and 374–397 (FLCP…KLKH). Residues 421 to 436 (NNNNDNNNNNNSNSAS) show a composition bias toward low complexity. The tract at residues 421-458 (NNNNDNNNNNNSNSASGSGGAGAAAAAATAPENEDGNG) is disordered.

The protein localises to the nucleus. Its function is as follows. Transcription factor that affects the expression of a large set of genes. Recognizes and binds to the consensus sequence 5'-[CAT]AGG[TC]A-3' in the promoter region. Plays a major role in the repression of a specific subset of hypoxic genes (e.g. ANB1, DAN1 and HEM13) under aerobic conditions. Acts synergistically with the transcription factor ROX1 to recruit the general repression complex SSN6-TUP1 to the promoter of hypoxic genes. Represses transcription of ergosterol biosynthetic genes. Negatively regulates pheromone-induced gene expression. Can act as a transcriptional activator (e.g. of genes like CYC1, SUC2 and the Ty long terminal repeat delta promoter). This is Transcriptional activator/repressor MOT3 (MOT3) from Saccharomyces cerevisiae (strain ATCC 204508 / S288c) (Baker's yeast).